Reading from the N-terminus, the 444-residue chain is MAAQVTEKLQDLHLNGQNGDAKANSTAVGQTEAGEAEDDSDDEKEDGNAAPEAGAGGAAKKKKRKSKKKKKGGAKVQSSPPRVPVSNLFPNNQYPEGEIVEYKNENSYRTTNEEKRYLDRMNNDFLQEYRQAAEVHRQVRQYAQRTIKPGQTLTEIAEGIEDAVRALTGHQGLEEGDNLKGGMGFPCGLSINHCAAHYTPNAGNKMVLQQGDVMKVDFGAHINGRIVDSAFTMTFDPVYDPLLEAVKDATNTGIREAGIDVRMSDIGAAIQEAMESYEVELNGTMYPVKCIRNLNGHNIDQHIIHGGKSVPIVKGSDQTKMEEGETFAIETFGSTGKGYVREDMETSHYALIPDAPSVPLRLSSAKNLLNVINKNFGTLPFCRRYLDRLGQEKYLLGLNNLVSSGIVQDYPPLCDVKGSYTAQFEHTILLRPTVKEVISRGDDY.

The tract at residues 1–92 (MAAQVTEKLQ…VPVSNLFPNN (92 aa)) is disordered. The segment covering 15 to 29 (NGQNGDAKANSTAVG) has biased composition (polar residues). Residues 34–45 (GEAEDDSDDEKE) show a composition bias toward acidic residues. Residues 59 to 73 (AKKKKRKSKKKKKGG) are compositionally biased toward basic residues. Substrate is bound at residue histidine 197. Positions 217, 228, and 297 each coordinate a divalent metal cation. Histidine 305 is a substrate binding site. A divalent metal cation is bound by residues glutamate 330 and glutamate 425.

It belongs to the peptidase M24A family. Methionine aminopeptidase eukaryotic type 2 subfamily. It depends on Co(2+) as a cofactor. Requires Zn(2+) as cofactor. Mn(2+) is required as a cofactor. The cofactor is Fe(2+).

The protein localises to the cytoplasm. The catalysed reaction is Release of N-terminal amino acids, preferentially methionine, from peptides and arylamides.. In terms of biological role, cotranslationally removes the N-terminal methionine from nascent proteins. The N-terminal methionine is often cleaved when the second residue in the primary sequence is small and uncharged (Met-Ala-, Cys, Gly, Pro, Ser, Thr, or Val). This Neosartorya fischeri (strain ATCC 1020 / DSM 3700 / CBS 544.65 / FGSC A1164 / JCM 1740 / NRRL 181 / WB 181) (Aspergillus fischerianus) protein is Methionine aminopeptidase 2-1.